We begin with the raw amino-acid sequence, 65 residues long: Toxin CsEM1 (65 aa).

Residues 1-65 (KEGYLVNSYT…VWPLPNKTCN (65 aa)) form the LCN-type CS-alpha/beta domain. 4 cysteine pairs are disulfide-bonded: C12–C64, C16–C40, C25–C45, and C29–C47.

The protein belongs to the long (4 C-C) scorpion toxin superfamily. Sodium channel inhibitor family. Beta subfamily. As to expression, expressed by the venom gland.

The protein resides in the secreted. Beta toxins bind voltage-independently at site-4 of sodium channels (Nav) and shift the voltage of activation toward more negative potentials thereby affecting sodium channel activation and promoting spontaneous and repetitive firing. Highly potent. The chain is Toxin CsEM1 from Centruroides sculpturatus (Arizona bark scorpion).